The sequence spans 254 residues: Imidazole glycerol phosphate synthase subunit HisF (254 aa).

Catalysis depends on residues aspartate 13 and aspartate 132.

Belongs to the HisA/HisF family. As to quaternary structure, heterodimer of HisH and HisF.

It is found in the cytoplasm. It carries out the reaction 5-[(5-phospho-1-deoxy-D-ribulos-1-ylimino)methylamino]-1-(5-phospho-beta-D-ribosyl)imidazole-4-carboxamide + L-glutamine = D-erythro-1-(imidazol-4-yl)glycerol 3-phosphate + 5-amino-1-(5-phospho-beta-D-ribosyl)imidazole-4-carboxamide + L-glutamate + H(+). The protein operates within amino-acid biosynthesis; L-histidine biosynthesis; L-histidine from 5-phospho-alpha-D-ribose 1-diphosphate: step 5/9. Functionally, IGPS catalyzes the conversion of PRFAR and glutamine to IGP, AICAR and glutamate. The HisF subunit catalyzes the cyclization activity that produces IGP and AICAR from PRFAR using the ammonia provided by the HisH subunit. This is Imidazole glycerol phosphate synthase subunit HisF from Wolinella succinogenes (strain ATCC 29543 / DSM 1740 / CCUG 13145 / JCM 31913 / LMG 7466 / NCTC 11488 / FDC 602W) (Vibrio succinogenes).